Reading from the N-terminus, the 293-residue chain is 4-hydroxy-tetrahydrodipicolinate synthase (293 aa).

Residue threonine 45 participates in pyruvate binding. Tyrosine 133 functions as the Proton donor/acceptor in the catalytic mechanism. Lysine 161 functions as the Schiff-base intermediate with substrate in the catalytic mechanism. Isoleucine 203 provides a ligand contact to pyruvate.

It belongs to the DapA family. As to quaternary structure, homotetramer; dimer of dimers.

It localises to the cytoplasm. It catalyses the reaction L-aspartate 4-semialdehyde + pyruvate = (2S,4S)-4-hydroxy-2,3,4,5-tetrahydrodipicolinate + H2O + H(+). It functions in the pathway amino-acid biosynthesis; L-lysine biosynthesis via DAP pathway; (S)-tetrahydrodipicolinate from L-aspartate: step 3/4. Catalyzes the condensation of (S)-aspartate-beta-semialdehyde [(S)-ASA] and pyruvate to 4-hydroxy-tetrahydrodipicolinate (HTPA). The protein is 4-hydroxy-tetrahydrodipicolinate synthase of Syntrophotalea carbinolica (strain DSM 2380 / NBRC 103641 / GraBd1) (Pelobacter carbinolicus).